Reading from the N-terminus, the 335-residue chain is NADH-quinone oxidoreductase subunit H (335 aa).

8 consecutive transmembrane segments (helical) span residues 11-31, 81-101, 114-134, 154-174, 187-207, 238-258, 270-290, and 309-329; these read VIIS…AGAL, VIFT…FAVI, IGLL…LFAG, VSYE…VGSF, LWFI…GVAV, FFVG…TLFF, QLAF…FILL, and FCLP…LLNT.

Belongs to the complex I subunit 1 family. In terms of assembly, NDH-1 is composed of 13 different subunits. Subunits NuoA, H, J, K, L, M, N constitute the membrane sector of the complex.

It localises to the cell inner membrane. The enzyme catalyses a quinone + NADH + 5 H(+)(in) = a quinol + NAD(+) + 4 H(+)(out). NDH-1 shuttles electrons from NADH, via FMN and iron-sulfur (Fe-S) centers, to quinones in the respiratory chain. The immediate electron acceptor for the enzyme in this species is believed to be ubiquinone. Couples the redox reaction to proton translocation (for every two electrons transferred, four hydrogen ions are translocated across the cytoplasmic membrane), and thus conserves the redox energy in a proton gradient. This subunit may bind ubiquinone. This is NADH-quinone oxidoreductase subunit H from Pseudomonas fluorescens (strain SBW25).